Here is a 512-residue protein sequence, read N- to C-terminus: 2'-5'-oligoadenylate synthase-like protein 1 (512 aa).

Ubiquitin-like domains lie at 351-430 and 431-507; these read IQVT…ISPE and IQVF…EGKA.

It belongs to the 2-5A synthase family. In terms of assembly, specifically interacts with the ligand binding domain of the thyroid receptor (TR). TRIP14 does not require the presence of thyroid hormone for its interaction. Binds MBD1.

It is found in the nucleus. The protein localises to the nucleolus. Its subcellular location is the cytoplasm. Does not have 2'-5'-OAS activity, but can bind double-stranded RNA. Displays antiviral activity via an alternative antiviral pathway independent of RNase L. The protein is 2'-5'-oligoadenylate synthase-like protein 1 (Oasl) of Rattus norvegicus (Rat).